We begin with the raw amino-acid sequence, 135 residues long: Small ribosomal subunit protein bS6 (135 aa).

The disordered stretch occupies residues 96–135 (HAEGPSIQMQKRDERERGDRGDRSDRGDRGDRGDRGGFRR). Residues 105-135 (QKRDERERGDRGDRSDRGDRGDRGDRGGFRR) show a composition bias toward basic and acidic residues.

This sequence belongs to the bacterial ribosomal protein bS6 family.

Binds together with bS18 to 16S ribosomal RNA. This chain is Small ribosomal subunit protein bS6, found in Cereibacter sphaeroides (strain ATCC 17029 / ATH 2.4.9) (Rhodobacter sphaeroides).